Here is a 314-residue protein sequence, read N- to C-terminus: tRNA dimethylallyltransferase (314 aa).

Residue Gly-13–Thr-20 participates in ATP binding. Residue Thr-15–Thr-20 coordinates substrate. The segment at Asp-38–Gln-41 is interaction with substrate tRNA.

The protein belongs to the IPP transferase family. Monomer. Requires Mg(2+) as cofactor.

The catalysed reaction is adenosine(37) in tRNA + dimethylallyl diphosphate = N(6)-dimethylallyladenosine(37) in tRNA + diphosphate. Its function is as follows. Catalyzes the transfer of a dimethylallyl group onto the adenine at position 37 in tRNAs that read codons beginning with uridine, leading to the formation of N6-(dimethylallyl)adenosine (i(6)A). This chain is tRNA dimethylallyltransferase, found in Bacillus licheniformis (strain ATCC 14580 / DSM 13 / JCM 2505 / CCUG 7422 / NBRC 12200 / NCIMB 9375 / NCTC 10341 / NRRL NRS-1264 / Gibson 46).